The chain runs to 107 residues: Putative pterin-4-alpha-carbinolamine dehydratase (107 aa).

It belongs to the pterin-4-alpha-carbinolamine dehydratase family.

It catalyses the reaction (4aS,6R)-4a-hydroxy-L-erythro-5,6,7,8-tetrahydrobiopterin = (6R)-L-erythro-6,7-dihydrobiopterin + H2O. In Paracoccus denitrificans (strain Pd 1222), this protein is Putative pterin-4-alpha-carbinolamine dehydratase.